We begin with the raw amino-acid sequence, 387 residues long: ADP,ATP carrier protein 2, mitochondrial (387 aa).

A mitochondrion-targeting transit peptide spans 1–77; sequence MADQANQPTV…PVMPTPLFAN (77 aa). Solcar repeat units follow at residues 85–178, 190–282, and 290–376; these read KNFM…FKRL, KWFA…IKPV, and DNFF…LQIL. 5 helical membrane passes run 87–114, 155–179, 188–208, 258–279, and 293–313; these read FMID…VKLL, TANV…KRLF, YWKW…SSLF, FNIS…YDSI, and FASF…SYPI. 2 residues coordinate ADP: arginine 160 and lysine 172. Arginine 317 contacts ADP. The segment at 317–322 is important for transport activity; the sequence is RRRMMM. Positions 317 to 322 match the Nucleotide carrier signature motif motif; the sequence is RRRMMM. A helical membrane pass occupies residues 353-373; that stretch reads AGANILRAIAGAGVLSGYDQL.

It belongs to the mitochondrial carrier (TC 2.A.29) family. Monomer.

The protein resides in the mitochondrion inner membrane. The enzyme catalyses ADP(in) + ATP(out) = ADP(out) + ATP(in). With respect to regulation, the matrix-open state (m-state) is inhibited by the membrane-permeable bongkrekic acid (BKA). The cytoplasmic-open state (c-state) is inhibited by the membrane-impermeable toxic inhibitor carboxyatractyloside (CATR). ADP:ATP antiporter that mediates import of ADP into the mitochondrial matrix for ATP synthesis, and export of ATP out to fuel the cell. Cycles between the cytoplasmic-open state (c-state) and the matrix-open state (m-state): operates by the alternating access mechanism with a single substrate-binding site intermittently exposed to either the cytosolic (c-state) or matrix (m-state) side of the inner mitochondrial membrane. This chain is ADP,ATP carrier protein 2, mitochondrial (ANT2), found in Zea mays (Maize).